Reading from the N-terminus, the 254-residue chain is Mitochondrial cardiolipin hydrolase (254 aa).

At 1-9 (MERFRWQVA) the chain is on the mitochondrial intermembrane side. The required for mitochondrial localization stretch occupies residues 1–43 (MERFRWQVAAVAAVGLALALEALPSVLCWLRAGRRQQQRPPRR). Residues 10-32 (AVAAVGLALALEALPSVLCWLRA) form a helical membrane-spanning segment. At 33 to 254 (GRRQQQRPPR…SKCSHHLSQV (222 aa)) the chain is on the cytoplasmic side. The C3H1-type; atypical zinc finger occupies 49–82 (PSQVTCTEALLQAPGEAPSGPPAGCRCSLPHGES). The region spanning 155-182 (DLGYMHHKFAIVDKKVLITGSLNWTTQA) is the PLD phosphodiesterase domain. Residues H160, K162, and D167 contribute to the active site.

This sequence belongs to the phospholipase D family. MitoPLD/Zucchini subfamily. As to quaternary structure, homodimer. Interacts with MOV10L1. Interacts with MIGA1 and MIGA2; possibly facilitating homodimer formation. Interacts with GK2.

It is found in the mitochondrion outer membrane. Its subcellular location is the nucleus membrane. The protein localises to the cell membrane. The protein resides in the golgi apparatus. It catalyses the reaction a cardiolipin + H2O = a 1,2-diacyl-sn-glycero-3-phospho-(1'-sn-glycerol) + a 1,2-diacyl-sn-glycero-3-phosphate + H(+). Its activity is regulated as follows. Single stranded DNA (ssDNA) hydrolase activity does not depend upon, but is stimulated by the presence of Ca(2+) and Mn(2+). MIGA1 and MIGA2 increase PLD6 self-association affinity and affects the homodimer conformation facilitating its phospholipase activity over the nuclease activity. MYC induces its expression and stimulates its phospholipase activity. Functionally, presents phospholipase and nuclease activities, depending on the different physiological conditions. Interaction with Mitoguardin (MIGA1 or MIGA2) affects the dimer conformation, facilitating the lipase activity over the nuclease activity. Plays a key role in mitochondrial fusion and fission via its phospholipase activity. In its phospholipase role, it uses the mitochondrial lipid cardiolipin as substrate to generate phosphatidate (PA or 1,2-diacyl-sn-glycero-3-phosphate), a second messenger signaling lipid. Production of PA facilitates Mitofusin-mediated fusion, whereas the cleavage of PA by the Lipin family of phosphatases produces diacylgycerol (DAG) which promotes mitochondrial fission. Both Lipin and DAG regulate mitochondrial dynamics and membrane fusion/fission, important processes for adapting mitochondrial metabolism to changes in cell physiology. Mitochondrial fusion enables cells to cope with the increased nucleotide demand during DNA synthesis. Mitochondrial function and dynamics are closely associated with biological processes such as cell growth, proliferation, and differentiation. Mediator of MYC activity, promotes mitochondrial fusion and activates AMPK which in turn inhibits YAP/TAZ, thereby inducing cell growth and proliferation. The endonuclease activity plays a critical role in PIWI-interacting RNA (piRNA) biogenesis during spermatogenesis. Implicated in spermatogenesis and sperm fertility in testicular germ cells, its single strand-specific nuclease activity is critical for the biogenesis/maturation of PIWI-interacting RNA (piRNA). MOV10L1 selectively binds to piRNA precursors and funnels them to the endonuclease that catalyzes the first cleavage step of piRNA processing to generate piRNA intermediate fragments that are subsequently loaded to Piwi proteins. Cleaves either DNA or RNA substrates with similar affinity, producing a 5' phosphate end, in this way it participates in the processing of primary piRNA transcripts. piRNAs provide essential protection against the activity of mobile genetic elements. piRNA-mediated transposon silencing is thus critical for maintaining genome stability, in particular in germline cells when transposons are mobilized as a consequence of wide-spread genomic demethylation. PA may act as signaling molecule in the recognition/transport of the precursor RNAs of primary piRNAs. Interacts with tesmin in testes, suggesting a role in spermatogenesis via association with its interacting partner. The sequence is that of Mitochondrial cardiolipin hydrolase (PLD6) from Canis lupus familiaris (Dog).